A 595-amino-acid polypeptide reads, in one-letter code: Aspartate--tRNA ligase (595 aa).

L-aspartate is bound at residue Glu-180. Residues 204–207 (QLFK) form an aspartate region. Residue Arg-226 coordinates L-aspartate. ATP contacts are provided by residues 226–228 (RDE) and Gln-235. His-454 is an L-aspartate binding site. Residue Glu-488 participates in ATP binding. L-aspartate is bound at residue Arg-495. Position 540–543 (540–543 (GLDR)) interacts with ATP.

This sequence belongs to the class-II aminoacyl-tRNA synthetase family. Type 1 subfamily. As to quaternary structure, homodimer.

It localises to the cytoplasm. It carries out the reaction tRNA(Asp) + L-aspartate + ATP = L-aspartyl-tRNA(Asp) + AMP + diphosphate. Its function is as follows. Catalyzes the attachment of L-aspartate to tRNA(Asp) in a two-step reaction: L-aspartate is first activated by ATP to form Asp-AMP and then transferred to the acceptor end of tRNA(Asp). In Clostridium acetobutylicum (strain ATCC 824 / DSM 792 / JCM 1419 / IAM 19013 / LMG 5710 / NBRC 13948 / NRRL B-527 / VKM B-1787 / 2291 / W), this protein is Aspartate--tRNA ligase.